Consider the following 793-residue polypeptide: Caldesmon (793 aa).

Position 12 is a phosphoserine (Arg-12). Phosphotyrosine is present on Glu-21. 3 disordered regions span residues 26-94 (AYQR…DDEA), 108-407 (QKRL…IKGE), and 434-458 (KKQG…KPTF). Residues 26 to 207 (AYQRNDDDEE…PKRGSIGENQ (182 aa)) form a myosin and calmodulin-binding region. Over residues 47 to 56 (QERLRQKQEE) the composition is skewed to basic and acidic residues. Polar residues predominate over residues 60–74 (GQVTDQVEVNAQNSV). The segment covering 108 to 122 (QKRLQEALERQKEFD) has biased composition (basic and acidic residues). Ser-129 is subject to Phosphoserine. Composition is skewed to basic and acidic residues over residues 146–162 (TTEK…RYEI) and 173–188 (QKND…KEDK). 2 positions are modified to phosphoserine: Glu-196 and Ser-202. Residues Ile-203 and Glu-209 each participate in a glycyl lysine isopeptide (Lys-Gly) (interchain with G-Cter in SUMO2) cross-link. Basic and acidic residues-rich tracts occupy residues 236–407 (EEPK…IKGE) and 435–458 (KQGE…KPTF). Repeat copies occupy residues 319 to 332 (EEEK…QRIK), 333 to 346 (EEEK…QRIK), and 347 to 360 (EEEK…QRIK). Positions 319 to 375 (EEEKRAAEERQRIKEEEKRAAEERQRIKEEEKRAAEERQRIKEEEKRAAEERQRARA) are 3 X 14 AA tandem repeats of E-E-E-K-R-A-A-E-E-R-Q-R-I-K. A Glycyl lysine isopeptide (Lys-Gly) (interchain with G-Cter in SUMO2) cross-link involves residue Lys-459. Residues 492–640 (KSQNGEFMTH…KKPFKCFTPK (149 aa)) form a disordered region. Composition is skewed to basic and acidic residues over residues 532 to 558 (AGKR…KQKQ) and 566 to 633 (EELK…DKKP). The tract at residues 564-621 (ELEELKKKREERRKVLEEEEQRRKQEEADRKLREEEEKRRLKEEIERRRAEAAEKRQK) is tropomyosin-binding. Ser-643 is modified (phosphoserine). Lys-645 is covalently cross-linked (Glycyl lysine isopeptide (Lys-Gly) (interchain with G-Cter in SUMO2)). The strong actin-binding stretch occupies residues 653–686 (LNKSVQKSSGVKSTHQAAIVSKIDSRLEQYTSAI). The residue at position 656 (Ser-656) is a Phosphoserine. The tract at residues 664-674 (KSTHQAAIVSK) is tropomyosin-binding. Disordered regions lie at residues 687 to 706 (EGTK…PVPA), 721 to 740 (VFSS…GLKV), and 747 to 793 (NEWL…PTKV). The tract at residues 716-722 (WEKGNVF) is calmodulin-binding. Residues 721–733 (VFSSPTAAGTPNK) show a composition bias toward polar residues. Ser-724 is subject to Phosphoserine. Phosphothreonine is present on residues Thr-730 and Thr-753. Ser-759 bears the Phosphoserine mark. Residues 765-784 (SDLRPGDVSSKRNLWEKQSV) are compositionally biased toward basic and acidic residues. A weak actin-binding region spans residues 768 to 793 (RPGDVSSKRNLWEKQSVDKVTSPTKV). Ser-789 carries the phosphoserine modification.

It belongs to the caldesmon family. In non-muscle cells, phosphorylation by CDK1 during mitosis causes caldesmon to dissociate from microfilaments. Phosphorylation reduces caldesmon binding to actin, myosin, and calmodulin as well as its inhibition of actomyosin ATPase activity. Phosphorylation also occurs in both quiescent and dividing smooth muscle cells with similar effects on the interaction with actin and calmodulin and on microfilaments reorganization. CDK1-mediated phosphorylation promotes Schwann cell migration during peripheral nerve regeneration. High-molecular-weight caldesmon (isoform 1) is predominantly expressed in smooth muscles, whereas low-molecular-weight caldesmon (isoforms 2, 3, 4 and 5) are widely distributed in non-muscle tissues and cells. Not expressed in skeletal muscle or heart.

It localises to the cytoplasm. The protein localises to the cytoskeleton. The protein resides in the myofibril. Its subcellular location is the stress fiber. In terms of biological role, actin- and myosin-binding protein implicated in the regulation of actomyosin interactions in smooth muscle and nonmuscle cells (could act as a bridge between myosin and actin filaments). Stimulates actin binding of tropomyosin which increases the stabilization of actin filament structure. In muscle tissues, inhibits the actomyosin ATPase by binding to F-actin. This inhibition is attenuated by calcium-calmodulin and is potentiated by tropomyosin. Interacts with actin, myosin, two molecules of tropomyosin and with calmodulin. Also plays an essential role during cellular mitosis and receptor capping. Involved in Schwann cell migration during peripheral nerve regeneration. The polypeptide is Caldesmon (CALD1) (Homo sapiens (Human)).